A 354-amino-acid chain; its full sequence is Prephenate dehydrogenase (354 aa).

The region spanning 2 to 283 is the Prephenate/arogenate dehydrogenase domain; the sequence is KKILIIGLGL…AMEIHKGALP (282 aa). 3-33 provides a ligand contact to NAD(+); sequence KILIIGLGLIGSSIALGIKKAHPEFEILGSD. An ACT domain is found at 287–354; that stretch reads DLFISVPDEK…IEKATDFTVV (68 aa).

The protein belongs to the prephenate/arogenate dehydrogenase family.

The catalysed reaction is prephenate + NAD(+) = 3-(4-hydroxyphenyl)pyruvate + CO2 + NADH. It participates in amino-acid biosynthesis; L-tyrosine biosynthesis; (4-hydroxyphenyl)pyruvate from prephenate (NAD(+) route): step 1/1. The polypeptide is Prephenate dehydrogenase (tyrA) (Lactococcus lactis subsp. cremoris (strain MG1363)).